The following is a 72-amino-acid chain: Large ribosomal subunit protein bL31 (72 aa).

Residues C16, C18, C38, and C41 each coordinate Zn(2+).

This sequence belongs to the bacterial ribosomal protein bL31 family. Type A subfamily. As to quaternary structure, part of the 50S ribosomal subunit. It depends on Zn(2+) as a cofactor.

Its function is as follows. Binds the 23S rRNA. This is Large ribosomal subunit protein bL31 from Francisella tularensis subsp. holarctica (strain LVS).